The primary structure comprises 247 residues: Adenosine 5'-phosphosulfate reductase (247 aa).

[4Fe-4S] cluster contacts are provided by Cys-133, Cys-134, Cys-216, and Cys-219. Positions 222 to 247 are disordered; that stretch reads KPAPGSDPRSGRWAGQAKTECGLHAS. The active-site Nucleophile; cysteine thiosulfonate intermediate is the Cys-242.

The protein belongs to the PAPS reductase family. CysH subfamily. The cofactor is [4Fe-4S] cluster.

The protein resides in the cytoplasm. It carries out the reaction [thioredoxin]-disulfide + sulfite + AMP + 2 H(+) = adenosine 5'-phosphosulfate + [thioredoxin]-dithiol. Its pathway is sulfur metabolism; hydrogen sulfide biosynthesis; sulfite from sulfate. In terms of biological role, catalyzes the formation of sulfite from adenosine 5'-phosphosulfate (APS) using thioredoxin as an electron donor. The polypeptide is Adenosine 5'-phosphosulfate reductase (Rhodococcus opacus (strain B4)).